The sequence spans 1052 residues: Lateral signaling target protein 2 homolog (1052 aa).

Disordered stretches follow at residues 311-348, 379-455, 506-539, 551-678, and 814-973; these read YSSIEAPSPEPNSSNNHNNNNSNSSDSGSAKTSTTSPH, PSML…DSDS, DEFGAEQEQEQQQRQREEQLQPSSEQQEEPSTSA, LRLP…ASSF, and NTID…IPDG. Low complexity-rich tracts occupy residues 312-346, 379-392, and 400-419; these read SSIEAPSPEPNSSNNHNNNNSNSSDSGSAKTSTTS, PSMLSLSAGSTPTA, and PSHSIASTSSAATTSTNPPA. A compositionally biased stretch (acidic residues) spans 422 to 455; it reads SEDDDDDDEEREDDEEECGMLDSDEQDLNDDSDS. Residues 554-574 are compositionally biased toward polar residues; sequence PSSSSENEQTTGSNQQSTIKT. Phosphoserine is present on residues Ser555 and Ser556. Basic residues-rich tracts occupy residues 588-614 and 625-644; these read RQRHHSHHHHHRHHHHHHHHRQHHHQQ and SHHHHHQTHPHRTSRSARKR. Over residues 652–661 the composition is skewed to polar residues; sequence STTAEQQQTI. Residues 824–842 are compositionally biased toward low complexity; sequence NNNNNNNNNSGSSSSSNSS. Phosphoserine is present on Ser854. Low complexity predominate over residues 872 to 915; that stretch reads QQQQQQQAQLQLQMQRQRNNSVGSNSPSSSSSSSSSSEHNSPIS. Over residues 926-935 the composition is skewed to polar residues; the sequence is SNSASMPSIG. Low complexity predominate over residues 936-963; it reads STATTAAATAAATATTTTSATTTTTTTT. The FYVE-type zinc-finger motif lies at 972-1032; sequence DGKAPRCMSC…VCRECYVREV (61 aa). Cys978, Cys981, Cys994, Cys997, Cys1002, Cys1005, Cys1024, and Cys1027 together coordinate Zn(2+).

It belongs to the lst-2 family.

Its function is as follows. Negative regulator of epidermal growth factor receptor (EGFR) signaling. The polypeptide is Lateral signaling target protein 2 homolog (Drosophila virilis (Fruit fly)).